We begin with the raw amino-acid sequence, 190 residues long: Elongation factor P-like protein (190 aa).

The protein belongs to the elongation factor P family.

This chain is Elongation factor P-like protein, found in Pectobacterium atrosepticum (strain SCRI 1043 / ATCC BAA-672) (Erwinia carotovora subsp. atroseptica).